Here is a 478-residue protein sequence, read N- to C-terminus: Membrane-bound lytic murein transglycosylase F (478 aa).

Residues 1 to 29 (MFPDSSYLFSMRSLSRFLIAIFGCGALLA) form the signal peptide. The interval 30 to 269 (SCDSFERSVL…RLLDRYYGHI (240 aa)) is non-LT domain. The LT domain stretch occupies residues 271–478 (RLHHTDVNGI…RKEDDSWQEF (208 aa)). Glu316 is a catalytic residue.

It in the N-terminal section; belongs to the bacterial solute-binding protein 3 family. This sequence in the C-terminal section; belongs to the transglycosylase Slt family.

It is found in the cell outer membrane. It carries out the reaction Exolytic cleavage of the (1-&gt;4)-beta-glycosidic linkage between N-acetylmuramic acid (MurNAc) and N-acetylglucosamine (GlcNAc) residues in peptidoglycan, from either the reducing or the non-reducing ends of the peptidoglycan chains, with concomitant formation of a 1,6-anhydrobond in the MurNAc residue.. Functionally, murein-degrading enzyme that degrades murein glycan strands and insoluble, high-molecular weight murein sacculi, with the concomitant formation of a 1,6-anhydromuramoyl product. Lytic transglycosylases (LTs) play an integral role in the metabolism of the peptidoglycan (PG) sacculus. Their lytic action creates space within the PG sacculus to allow for its expansion as well as for the insertion of various structures such as secretion systems and flagella. The polypeptide is Membrane-bound lytic murein transglycosylase F (Nitrosospira multiformis (strain ATCC 25196 / NCIMB 11849 / C 71)).